The sequence spans 217 residues: MATVEPETTPTPNPPPTEEEKTESNQEVANPEHYIKHPLQNRWALWFFKNDKSKTWQANLRLISKFDTVEDFWALYNHIQLSSNLMPGCDYSLFKDGIEPMWEDEKNKRGGRWLITLNKQQRRSDLDRFWLETVLCLIGESFDDYSDDVCGAVVNVRAKGDKIAIWTTECENREAVTHIGRVYKERLGLPPKIVIGYQSHADTATKSGSTTKNRFVV.

The segment at 1-27 is disordered; the sequence is MATVEPETTPTPNPPPTEEEKTESNQE. Ala-2 bears the N-acetylalanine mark. Position 22 is a phosphothreonine (Thr-22). The tract at residues 37-40 is EIF4EBP1/2/3 binding; it reads HPLQ. MRNA is bound at residue 56-57; it reads WQ. An EIF4EBP1/2/3 binding region spans residues 73 to 77; that stretch reads WALYN. 102–103 provides a ligand contact to mRNA; it reads WE. An EIF4EBP1/2/3 binding region spans residues 132-139; that stretch reads ETVLCLIG. MRNA contacts are provided by residues 157 to 162 and 205 to 207; these read RAKGDK and TKS. Ser-209 carries the post-translational modification Phosphoserine; by PKC and MKNK2.

This sequence belongs to the eukaryotic initiation factor 4E family. EIF4F is a multi-subunit complex, the composition of which varies with external and internal environmental conditions. It is composed of at least EIF4A, EIF4E and EIF4G1/EIF4G3. EIF4E is also known to interact with other partners. Interacts with EIF4ENIF1/4E-T; promotes recruitment to P-bodies and import into the nucleus. Hypophosphorylated EIF4EBP1, EIF4EBP2 and EIF4EBP3 compete with EIF4G1/EIF4G3 to interact with EIF4E; insulin stimulated MAP-kinase (MAPK1 and MAPK3) phosphorylation of EIF4EBP1 causes dissociation of the complex allowing EIF4G1/EIF4G3 to bind and consequent initiation of translation. Interacts mutually exclusive with EIF4A1 or EIF4A2. Interacts with NGDN and PIWIL2. Component of the CYFIP1-EIF4E-FMR1 complex composed of CYFIP, EIF4E and FMR1. Interacts directly with CYFIP1. Interacts with CLOCK. Binds to MKNK2 in nucleus. Interacts with LIMD1, WTIP and AJUBA. Interacts with APOBEC3G in an RNA-dependent manner. Interacts with LARP1. Interacts with METTL3. Interacts with RBM24; this interaction prevents EIF4E from binding to p53/TP53 mRNA and inhibits the assembly of translation initiation complex. Interacts with DDX3X; interaction is direct and in an RNA-independent manner; this interaction enhances EIF4E cap-binding ability and is required for the repression of cap-dependent translation and the increase of IRES-mediated translation. DDX3X competes with EIF4G1 for interaction with EIF4E. Interacts with EIF4G1; which in a mutual exclusive interaction associates either with EIF1 or with EIF4E on a common binding site. Interacts with BTG4 and CNOT7. Interacts with LRPPRC (via N-terminus); the interaction promotes association of EIF4E with 4ESE-containing mRNAs. Interacts with mRNA cleavage enzyme CPSF3 and its cofactor CPSF1. Interacts (via RING-type zinc finger) with PML; the interaction results in conformational changes of both interacting proteins and reduces EIF4E affinity for the 5' m7G cap of mRNA, thus reducing EIF4E-mediated mRNA nuclear export. Interacts with homeobox protein HHEX/PRH; the interaction inhibits EIF4E-mediated mRNA nuclear export. Interacts with homeobox protein HOXA9; the interaction positively regulates EIF4E-mediated mRNA nuclear export. Interacts with homeobox protein EMX2. Phosphorylation increases the ability of the protein to bind to mRNA caps and to form the eIF4F complex. Phosphorylation also enhances its mRNA transport function. Phosphorylation at Ser-209 is not essential for protein synthesis.

Its subcellular location is the cytoplasm. It is found in the P-body. The protein resides in the stress granule. The protein localises to the nucleus. It localises to the nucleus speckle. Its subcellular location is the nuclear body. Functionally, acts in the cytoplasm to initiate and regulate protein synthesis and is required in the nucleus for export of a subset of mRNAs from the nucleus to the cytoplasm which promotes processes such as RNA capping, processing and splicing. Component of the protein complex eIF4F, which is involved in the recognition of the mRNA cap, ATP-dependent unwinding of 5'-terminal secondary structure and recruitment of mRNA to the ribosome. This protein recognizes and binds the 7-methylguanosine (m7G)-containing mRNA cap during an early step in the initiation of protein synthesis and facilitates ribosome binding by inducing the unwinding of the mRNAs secondary structures. Together with EIF4G1, antagonizes the scanning promoted by EIF1-EIF4G1 and is required for TISU translation, a process where the TISU element recognition makes scanning unnecessary. In addition to its role in translation initiation, also acts as a regulator of translation and stability in the cytoplasm. Component of the CYFIP1-EIF4E-FMR1 complex which binds to the mRNA cap and mediates translational repression: in the complex, EIF4E mediates the binding to the mRNA cap. Component of a multiprotein complex that sequesters and represses translation of proneurogenic factors during neurogenesis. In P-bodies, component of a complex that mediates the storage of translationally inactive mRNAs in the cytoplasm and prevents their degradation. May play an important role in spermatogenesis through translational regulation of stage-specific mRNAs during germ cell development. As well as its roles in translation, also involved in mRNA nucleocytoplasmic transport. Its role in mRNA export from the nucleus to the cytoplasm relies on its ability to bind the m7G cap of RNAs and on the presence of the 50-nucleotide EIF4E sensitivity element (4ESE) in the 3'UTR of sensitive transcripts. Interaction with the 4ESE is mediated by LRPPRC which binds simultaneously to both EIF4E and the 4ESE, thereby acting as a platform for assembly for the RNA export complex. EIF4E-dependent mRNA export is independent of ongoing protein or RNA synthesis and is also NFX1-independent but is XPO1-dependent with LRPPRC interacting with XPO1 to form an EIF4E-dependent mRNA export complex. Alters the composition of the cytoplasmic face of the nuclear pore to promote RNA export by reducing RANBP2 expression, relocalizing nucleoporin NUP214 and increasing expression of RANBP1 and RNA export factors DDX19 and GLE1. Promotes the nuclear export of cyclin CCND1 mRNA. Promotes the nuclear export of NOS2/iNOS mRNA. Promotes the nuclear export of MDM2 mRNA. Also promotes the export of additional mRNAs, including others involved in the cell cycle. In the nucleus, binds to capped splice factor-encoding mRNAs and stimulates their nuclear export to enhance splice factor production by increasing their cytoplasmic availability to the translation machinery. May also regulate splicing through interaction with the spliceosome in an RNA and m7G cap-dependent manner. Also binds to some pre-mRNAs and may play a role in their recruitment to the spliceosome. Promotes steady-state capping of a subset of coding and non-coding RNAs by mediating nuclear export of capping machinery mRNAs including RNMT, RNGTT and RAMAC to enhance their translation. Stimulates mRNA 3'-end processing by promoting the expression of several core cleavage complex factors required for mRNA cleavage and polyadenylation, and may also have a direct effect through its interaction with the CPSF3 cleavage enzyme. Rescues cells from apoptosis by promoting activation of serine/threonine-protein kinase AKT1 through mRNA export of NBS1 which potentiates AKT1 phosphorylation and also through mRNA export of AKT1 effectors, allowing for increased production of these proteins. The sequence is that of Eukaryotic translation initiation factor 4E (EIF4E) from Bos taurus (Bovine).